The primary structure comprises 551 residues: Adenylyl cyclase-associated protein (551 aa).

The tract at residues 34-55 (SGHKPLPNMHRPSRDSNSQTHN) is disordered. The residue at position 92 (serine 92) is a Phosphoserine. Threonine 96 carries the post-translational modification Phosphothreonine. Polar residues predominate over residues 288 to 300 (SASKTQAPSSGDS). Disordered regions lie at residues 288–333 (SASK…NKGD) and 348–395 (TSGL…PVKP). The span at 305–315 (LPPPPPPPPPS) shows a compositional bias: pro residues. Positions 352-361 (RKVDKSEMTH) are enriched in basic and acidic residues. The 135-residue stretch at 395–529 (PPRIELENTK…EEGDYAERAV (135 aa)) folds into the C-CAP/cofactor C-like domain.

It belongs to the CAP family.

Its function is as follows. The N-terminal domain binds to adenylyl cyclase, thereby enabling adenylyl cyclase to be activated by upstream regulatory signals, such as Ras. The C-terminal domain is required for normal cellular morphology and growth control. This Schizosaccharomyces pombe (strain 972 / ATCC 24843) (Fission yeast) protein is Adenylyl cyclase-associated protein (cap1).